Here is a 91-residue protein sequence, read N- to C-terminus: Uteroglobin (91 aa).

Positions Met1–Ala21 are cleaved as a signal peptide.

The protein belongs to the secretoglobin family. As to quaternary structure, antiparallel homodimer; disulfide-linked. Interaction with LMBR1L has been observed in PubMed:16423471, but not in PubMed:23964685. Club cells (nonciliated cells of the surface epithelium of the pulmonary airways).

Its subcellular location is the secreted. Binds phosphatidylcholine, phosphatidylinositol, polychlorinated biphenyls (PCB) and weakly progesterone, potent inhibitor of phospholipase A2. This is Uteroglobin (SCGB1A1) from Homo sapiens (Human).